The chain runs to 309 residues: WD repeat domain phosphoinositide-interacting protein 4 (309 aa).

One copy of the WD 1 repeat lies at 4–42 (QPLRGVTSLHFNQDQSCFCCAMETGVRIYNVEPLMEKGH). The L/FRRG motif signature appears at 180-183 (LRRG). Residues 184-223 (TDPATLYCINFSHDSSFLCASSDKGTVHIFALKDTRLNRR) form a WD 2 repeat.

The protein belongs to the WD repeat PROPPIN family. As to quaternary structure, interacts with WIPI1. Interacts with WIPI2. Interacts with ATG2A and ATG2B. Interacts with ULK1. May interact with the PRKAA1, PRKAA2, PRKAB1 and PRKAG1 subunits of the AMPK kinase. May interact with NUDC.

It localises to the preautophagosomal structure. The protein localises to the cytoplasm. In terms of biological role, component of the autophagy machinery that controls the major intracellular degradation process by which cytoplasmic materials are packaged into autophagosomes and delivered to lysosomes for degradation. Binds phosphatidylinositol 3-phosphate (PtdIns3P). Activated by the STK11/AMPK signaling pathway upon starvation, WDR45 is involved in autophagosome assembly downstream of WIPI2, regulating the size of forming autophagosomes. Together with WIPI1, promotes ATG2 (ATG2A or ATG2B)-mediated lipid transfer by enhancing ATG2-association with phosphatidylinositol 3-monophosphate (PI3P)-containing membranes. Probably recruited to membranes through its PtdIns3P activity. The protein is WD repeat domain phosphoinositide-interacting protein 4 (Wdr45) of Rattus norvegicus (Rat).